Reading from the N-terminus, the 132-residue chain is Large-conductance mechanosensitive channel (132 aa).

3 helical membrane passes run 14-34 (VLDM…VDSL), 39-59 (INPI…AVTI), and 68-88 (IGNF…VFLI).

This sequence belongs to the MscL family. In terms of assembly, homopentamer.

The protein localises to the cell membrane. In terms of biological role, channel that opens in response to stretch forces in the membrane lipid bilayer. May participate in the regulation of osmotic pressure changes within the cell. This is Large-conductance mechanosensitive channel from Latilactobacillus sakei subsp. sakei (strain 23K) (Lactobacillus sakei subsp. sakei).